A 252-amino-acid chain; its full sequence is Chitooligosaccharide deacetylase (252 aa).

Residue His125 coordinates Mg(2+).

Belongs to the YdjC deacetylase family. ChbG subfamily. As to quaternary structure, homodimer. It depends on Mg(2+) as a cofactor.

Its subcellular location is the cytoplasm. It catalyses the reaction N,N'-diacetylchitobiose + H2O = N-acetyl-beta-D-glucosaminyl-(1-&gt;4)-D-glucosamine + acetate. The enzyme catalyses diacetylchitobiose-6'-phosphate + H2O = N'-monoacetylchitobiose-6'-phosphate + acetate. It functions in the pathway glycan degradation; chitin degradation. Its function is as follows. Involved in the degradation of chitin. ChbG is essential for growth on the acetylated chitooligosaccharides chitobiose and chitotriose but is dispensable for growth on cellobiose and chitosan dimer, the deacetylated form of chitobiose. Deacetylation of chitobiose-6-P and chitotriose-6-P is necessary for both the activation of the chb promoter by the regulatory protein ChbR and the hydrolysis of phosphorylated beta-glucosides by the phospho-beta-glucosidase ChbF. Catalyzes the removal of only one acetyl group from chitobiose-6-P to yield monoacetylchitobiose-6-P, the inducer of ChbR and the substrate of ChbF. The sequence is that of Chitooligosaccharide deacetylase from Escherichia coli O157:H7.